The sequence spans 647 residues: Carotenoid phi-ring synthase (647 aa).

Residues Ala-67, Glu-86–Ala-87, Lys-94, and Tyr-120 contribute to the FAD site. In terms of domain architecture, Rieske spans Val-322 to Ile-416. Cys-362, His-364, Cys-380, and His-383 together coordinate [2Fe-2S] cluster. The FAD site is built by Asp-601 and Met-612.

It belongs to the carotenoid/retinoid oxidoreductase family. Requires FAD as cofactor. The cofactor is [2Fe-2S] cluster.

It carries out the reaction a carotenoid beta-end derivative + 2 A = a carotenoid phi-end derivative + 2 AH2. It functions in the pathway carotenoid biosynthesis. Its function is as follows. Involved in the biosynthesis of chlorobactene, a carotenoid with aromatic end group. Catalyzes the introduction of two additional double bonds into the ionone ring of gamma-carotene to produce chlorobactene. The reaction includes an intramolecular methyl transfer from position C1 to position C2 of the ring. The polypeptide is Carotenoid phi-ring synthase (Chlorobaculum tepidum (strain ATCC 49652 / DSM 12025 / NBRC 103806 / TLS) (Chlorobium tepidum)).